Reading from the N-terminus, the 607-residue chain is Vacuolar fusion protein MON1 homolog (607 aa).

Over residues 1 to 14 (MATSDSRSSPSSSD) the composition is skewed to low complexity. 2 disordered regions span residues 1–173 (MATS…DDAS) and 463–486 (PIDR…DISV). Residues 21 to 55 (NPSSDPETNSERVQSQLESMNLSQPSEVSDGSHTE) show a composition bias toward polar residues.

This sequence belongs to the MON1/SAND family. In terms of assembly, interacts with CCZ1A, CCZ1B and RABF2B. In terms of tissue distribution, widely expressed at stable levels.

It localises to the endosome. Its subcellular location is the prevacuolar compartment. In terms of biological role, plays an important role in membrane trafficking through the secretory apparatus. In complex with CCZ1, acts as a guanine exchange factor (GEF) for RABG3F of the Rab7 protein family. Promotes the exchange of GDP to GTP, converting RABG3F from an inactive GDP-bound form into an active GTP-bound form. The RABG3F active form is involved in protein trafficking from prevacuolar compartments (PVCs) to vacuoles. May serve as a linker between Rab5 and Rab7 protein families in PVCs and mediate PVC maturation. The chain is Vacuolar fusion protein MON1 homolog from Arabidopsis thaliana (Mouse-ear cress).